Here is a 58-residue protein sequence, read N- to C-terminus: Large ribosomal subunit protein uL30 (58 aa).

Belongs to the universal ribosomal protein uL30 family. Part of the 50S ribosomal subunit.

The polypeptide is Large ribosomal subunit protein uL30 (Buchnera aphidicola subsp. Baizongia pistaciae (strain Bp)).